The chain runs to 631 residues: KIF-binding protein (631 aa).

The span at 60 to 70 shows a compositional bias: acidic residues; that stretch reads EQGEAGDEADC. A disordered region spans residues 60 to 88; sequence EQGEAGDEADCESSQTADGEPEDGFEKTF.

This sequence belongs to the KIF-binding protein family. At 30 hpf, primarily expressed in central and peripheral neurons.

The protein localises to the cytoplasm. It is found in the cytoskeleton. Functionally, activator of KIF1B plus-end-directed microtubule motor activity. Required for organization of axonal microtubules, and axonal outgrowth and maintenance during peripheral and central nervous system development. This is KIF-binding protein (kifbp) from Danio rerio (Zebrafish).